The sequence spans 275 residues: MNRLFVAYKPPFVSSNAFLHKIKKRYRVKKAGFSGTLDPFACGTLIIAFGAYTKLFRFLQKYPKRYRTTIWLGASSPSLDIEKIESIQDVPPLDERTIKDIINSFVGEFTYIPPLFSAKKVGGKRAYHFAARGKQIDLKPVTSTIEEISFVHYRHPFITFEATVSEGTYIRSLAEAIAKKLGFPGTLSYLERLAEGKFVYENENPLDPVQYLRTKQNFVKKSKEAIFHGAKLTIDDLAYKEDGEYHILFDDFFAIIRVEKKKVRYLLNQIPRKYQ.

Asp38 functions as the Nucleophile in the catalytic mechanism.

This sequence belongs to the pseudouridine synthase TruB family. Type 1 subfamily.

It catalyses the reaction uridine(55) in tRNA = pseudouridine(55) in tRNA. In terms of biological role, responsible for synthesis of pseudouridine from uracil-55 in the psi GC loop of transfer RNAs. This chain is tRNA pseudouridine synthase B, found in Nitratiruptor sp. (strain SB155-2).